Consider the following 336-residue polypeptide: Zinc-type alcohol dehydrogenase-like protein SE_1777 (336 aa).

The protein belongs to the zinc-containing alcohol dehydrogenase family. Quinone oxidoreductase subfamily.

In Staphylococcus epidermidis (strain ATCC 12228 / FDA PCI 1200), this protein is Zinc-type alcohol dehydrogenase-like protein SE_1777.